A 485-amino-acid polypeptide reads, in one-letter code: Glutamate--tRNA ligase (485 aa).

A 'HIGH' region motif is present at residues 11 to 21 (PSPTGHLHIGN). Residues 252–256 (KLSKR) carry the 'KMSKS' region motif. Lysine 255 serves as a coordination point for ATP.

The protein belongs to the class-I aminoacyl-tRNA synthetase family. Glutamate--tRNA ligase type 1 subfamily. Monomer.

The protein localises to the cytoplasm. The enzyme catalyses tRNA(Glu) + L-glutamate + ATP = L-glutamyl-tRNA(Glu) + AMP + diphosphate. Catalyzes the attachment of glutamate to tRNA(Glu) in a two-step reaction: glutamate is first activated by ATP to form Glu-AMP and then transferred to the acceptor end of tRNA(Glu). This chain is Glutamate--tRNA ligase, found in Bacillus mycoides (strain KBAB4) (Bacillus weihenstephanensis).